Consider the following 174-residue polypeptide: MTTIVSVRRNNQVVIAGDGQVSLGNTVMKGNARKVRRLYHNKVLAGFAGGTADAFTLFERFEAKLEMHQGHLMRAAVEMAKDWRSDKVLRKLEALLAVADGEASLIITGNGDVVQPENDLIAIGSGGNFAQSAATALLENTELSALEIAEKSLTIAGDICVFTNQFKTIEELKY.

Threonine 2 is an active-site residue. The Na(+) site is built by glycine 157, cysteine 160, and threonine 163.

The protein belongs to the peptidase T1B family. HslV subfamily. As to quaternary structure, a double ring-shaped homohexamer of HslV is capped on each side by a ring-shaped HslU homohexamer. The assembly of the HslU/HslV complex is dependent on binding of ATP.

It is found in the cytoplasm. The enzyme catalyses ATP-dependent cleavage of peptide bonds with broad specificity.. With respect to regulation, allosterically activated by HslU binding. Its function is as follows. Protease subunit of a proteasome-like degradation complex believed to be a general protein degrading machinery. This Shewanella piezotolerans (strain WP3 / JCM 13877) protein is ATP-dependent protease subunit HslV.